The primary structure comprises 95 residues: Aspartyl/glutamyl-tRNA(Asn/Gln) amidotransferase subunit C (95 aa).

Belongs to the GatC family. In terms of assembly, heterotrimer of A, B and C subunits.

The catalysed reaction is L-glutamyl-tRNA(Gln) + L-glutamine + ATP + H2O = L-glutaminyl-tRNA(Gln) + L-glutamate + ADP + phosphate + H(+). It carries out the reaction L-aspartyl-tRNA(Asn) + L-glutamine + ATP + H2O = L-asparaginyl-tRNA(Asn) + L-glutamate + ADP + phosphate + 2 H(+). In terms of biological role, allows the formation of correctly charged Asn-tRNA(Asn) or Gln-tRNA(Gln) through the transamidation of misacylated Asp-tRNA(Asn) or Glu-tRNA(Gln) in organisms which lack either or both of asparaginyl-tRNA or glutaminyl-tRNA synthetases. The reaction takes place in the presence of glutamine and ATP through an activated phospho-Asp-tRNA(Asn) or phospho-Glu-tRNA(Gln). The chain is Aspartyl/glutamyl-tRNA(Asn/Gln) amidotransferase subunit C from Chloroherpeton thalassium (strain ATCC 35110 / GB-78).